The primary structure comprises 199 residues: MYEGAVQELIDELGRLPGVGPKSAQRLAFHILEADPEDMKRLVTAITTVKERVKFCTVCFNVTEQETCNICRDQRRDPSVICVVEESKDVLAVERTRSFRGRYHVLGGAINPIAGIGPEQLRIRELLTRLNDGAIQEIIIATDPNLEGEATATYLARMLKSIGITVTRLASGLPVGGDLEYADEVTLGRAFEGRRNALL.

The C4-type zinc-finger motif lies at 56-71 (CTVCFNVTEQETCNIC). Residues 79 to 174 (SVICVVEESK…TVTRLASGLP (96 aa)) form the Toprim domain.

The protein belongs to the RecR family.

Its function is as follows. May play a role in DNA repair. It seems to be involved in an RecBC-independent recombinational process of DNA repair. It may act with RecF and RecO. This chain is Recombination protein RecR, found in Paenarthrobacter aurescens (strain TC1).